The primary structure comprises 173 residues: Ribosome maturation factor RimM (173 aa).

A PRC barrel domain is found at 96–169; sequence PDEYYDHQLE…LVEIDPPEGL (74 aa).

The protein belongs to the RimM family. Binds ribosomal protein uS19.

The protein resides in the cytoplasm. Functionally, an accessory protein needed during the final step in the assembly of 30S ribosomal subunit, possibly for assembly of the head region. Essential for efficient processing of 16S rRNA. May be needed both before and after RbfA during the maturation of 16S rRNA. It has affinity for free ribosomal 30S subunits but not for 70S ribosomes. In Mycobacterium sp. (strain JLS), this protein is Ribosome maturation factor RimM.